A 216-amino-acid chain; its full sequence is Adenylate kinase (216 aa).

13-18 provides a ligand contact to ATP; it reads GAGKGT. Residues 33-66 form an NMP region; sequence TTGDALRANKDMDISDMDTEYDTPREYMEAGDLV. Residues Thr34, Arg39, 64 to 66, 89 to 92, and Gln96 each bind AMP; these read DLV and GYPR. The LID stretch occupies residues 125 to 162; the sequence is GRRVCDDCGTNYHVEFNQPEEDGVCDECGGDLIQRDDD. Arg126 lines the ATP pocket. The Zn(2+) site is built by Cys129, Cys132, Cys149, and Cys152. Arg159 and Arg170 together coordinate AMP. Gln198 is a binding site for ATP.

This sequence belongs to the adenylate kinase family. Monomer.

Its subcellular location is the cytoplasm. The catalysed reaction is AMP + ATP = 2 ADP. It functions in the pathway purine metabolism; AMP biosynthesis via salvage pathway; AMP from ADP: step 1/1. Functionally, catalyzes the reversible transfer of the terminal phosphate group between ATP and AMP. Plays an important role in cellular energy homeostasis and in adenine nucleotide metabolism. This chain is Adenylate kinase, found in Haloarcula marismortui (strain ATCC 43049 / DSM 3752 / JCM 8966 / VKM B-1809) (Halobacterium marismortui).